Here is a 132-residue protein sequence, read N- to C-terminus: MAKKIAAKKVTKKRVKKNVDRGQAHIQSSFNNTIVTLTDAEGNALSWASAGGLGFRGSRKSTPYAAQMAAETAAKAALVHGLKTVEVMVKGPGSGREAAIRALQACGIEVTSIKDVTPVPHNGCRPPKRRRV.

This sequence belongs to the universal ribosomal protein uS11 family. In terms of assembly, part of the 30S ribosomal subunit. Interacts with proteins S7 and S18. Binds to IF-3.

Its function is as follows. Located on the platform of the 30S subunit, it bridges several disparate RNA helices of the 16S rRNA. Forms part of the Shine-Dalgarno cleft in the 70S ribosome. The protein is Small ribosomal subunit protein uS11 of Lachnoclostridium phytofermentans (strain ATCC 700394 / DSM 18823 / ISDg) (Clostridium phytofermentans).